The following is a 137-amino-acid chain: Peptide methionine sulfoxide reductase MsrB (137 aa).

Residues 7-129 (PTENIEKLSD…NSASLNFVDD (123 aa)) enclose the MsrB domain. Residues C46, C49, C95, and C98 each coordinate Zn(2+). C118 acts as the Nucleophile in catalysis.

Belongs to the MsrB Met sulfoxide reductase family. Requires Zn(2+) as cofactor.

It catalyses the reaction L-methionyl-[protein] + [thioredoxin]-disulfide + H2O = L-methionyl-(R)-S-oxide-[protein] + [thioredoxin]-dithiol. The protein is Peptide methionine sulfoxide reductase MsrB of Yersinia pseudotuberculosis serotype O:1b (strain IP 31758).